Consider the following 743-residue polypeptide: Phosphoribosylformylglycinamidine synthase subunit PurL (743 aa).

Residue His50 is part of the active site. Residues Tyr53 and Lys92 each coordinate ATP. Mg(2+) is bound at residue Glu94. Residues 95-98 and Arg117 each bind substrate; that span reads SHNH. Residue His96 is the Proton acceptor of the active site. Residue Asp118 coordinates Mg(2+). Gln241 is a substrate binding site. A Mg(2+)-binding site is contributed by Asp269. 313 to 315 contacts substrate; it reads ESQ. ATP-binding residues include Asp495 and Gly532. Residue Asn533 participates in Mg(2+) binding. Ser535 provides a ligand contact to substrate.

The protein belongs to the FGAMS family. As to quaternary structure, monomer. Part of the FGAM synthase complex composed of 1 PurL, 1 PurQ and 2 PurS subunits.

It is found in the cytoplasm. It carries out the reaction N(2)-formyl-N(1)-(5-phospho-beta-D-ribosyl)glycinamide + L-glutamine + ATP + H2O = 2-formamido-N(1)-(5-O-phospho-beta-D-ribosyl)acetamidine + L-glutamate + ADP + phosphate + H(+). Its pathway is purine metabolism; IMP biosynthesis via de novo pathway; 5-amino-1-(5-phospho-D-ribosyl)imidazole from N(2)-formyl-N(1)-(5-phospho-D-ribosyl)glycinamide: step 1/2. In terms of biological role, part of the phosphoribosylformylglycinamidine synthase complex involved in the purines biosynthetic pathway. Catalyzes the ATP-dependent conversion of formylglycinamide ribonucleotide (FGAR) and glutamine to yield formylglycinamidine ribonucleotide (FGAM) and glutamate. The FGAM synthase complex is composed of three subunits. PurQ produces an ammonia molecule by converting glutamine to glutamate. PurL transfers the ammonia molecule to FGAR to form FGAM in an ATP-dependent manner. PurS interacts with PurQ and PurL and is thought to assist in the transfer of the ammonia molecule from PurQ to PurL. The polypeptide is Phosphoribosylformylglycinamidine synthase subunit PurL (Rhizobium etli (strain ATCC 51251 / DSM 11541 / JCM 21823 / NBRC 15573 / CFN 42)).